Reading from the N-terminus, the 429-residue chain is Glutamate-1-semialdehyde 2,1-aminomutase (429 aa).

Lys267 is subject to N6-(pyridoxal phosphate)lysine.

Belongs to the class-III pyridoxal-phosphate-dependent aminotransferase family. HemL subfamily. As to quaternary structure, homodimer. Requires pyridoxal 5'-phosphate as cofactor.

It localises to the cytoplasm. The catalysed reaction is (S)-4-amino-5-oxopentanoate = 5-aminolevulinate. It participates in porphyrin-containing compound metabolism; protoporphyrin-IX biosynthesis; 5-aminolevulinate from L-glutamyl-tRNA(Glu): step 2/2. The sequence is that of Glutamate-1-semialdehyde 2,1-aminomutase from Stenotrophomonas maltophilia (strain K279a).